The following is a 241-amino-acid chain: MTDFSRADGRAVDQMRTVKITRGFTSNPAGSVLVEFGNTRVMCTASVELGVPRFKRDSGEGWLTAEYAMLPAATAERNARESMRGKVKGRTHEISRLIGRSLRAAVDLDELGENTINIDCDVLQADGGTRTASITGAYVALADAIAVLKEQGVVPGNPLKAAVAAVSVGVIDGQVCLDLPYEEDSRADVDMNVIMQGDRFVEIQGTGEHNTFDRDELAVILDFAQKGCQELFAAQKAALEQ.

Phosphate is bound by residues Arg90 and 128 to 130; that span reads GTR.

It belongs to the RNase PH family. In terms of assembly, homohexameric ring arranged as a trimer of dimers.

It catalyses the reaction tRNA(n+1) + phosphate = tRNA(n) + a ribonucleoside 5'-diphosphate. Phosphorolytic 3'-5' exoribonuclease that plays an important role in tRNA 3'-end maturation. Removes nucleotide residues following the 3'-CCA terminus of tRNAs; can also add nucleotides to the ends of RNA molecules by using nucleoside diphosphates as substrates, but this may not be physiologically important. Probably plays a role in initiation of 16S rRNA degradation (leading to ribosome degradation) during starvation. This is Ribonuclease PH from Corynebacterium diphtheriae (strain ATCC 700971 / NCTC 13129 / Biotype gravis).